A 105-amino-acid chain; its full sequence is Insulin (105 aa).

Residues 1 to 22 (MAFWLQAASLLVLLALSPGVDA) form the signal peptide. 3 cysteine pairs are disulfide-bonded: Cys29–Cys91, Cys41–Cys104, and Cys90–Cys95. A propeptide spans 53 to 82 (DVDPLIGFLSPKSAKENEEYPFKDQTEMMV) (c peptide).

It belongs to the insulin family. Heterodimer of a B chain and an A chain linked by two disulfide bonds.

The protein resides in the secreted. Insulin decreases blood glucose concentration. It increases cell permeability to monosaccharides, amino acids and fatty acids. It accelerates glycolysis, the pentose phosphate cycle, and glycogen synthesis in liver. The chain is Insulin (ins) from Oncorhynchus keta (Chum salmon).